The following is a 142-amino-acid chain: Pro-Viral epidermal growth factor (142 aa).

An N-terminal signal peptide occupies residues 1-19; the sequence is MSIKYLMLLFAAMIIRSLA. Topologically, residues 20–104 are extracellular; that stretch reads DSGNAIETTS…DTTTSYIPSL (85 aa). Asparagine 34 carries N-linked (GlcNAc...) asparagine; by host glycosylation. Cysteine 71 and cysteine 80 are oxidised to a cystine. A helical membrane pass occupies residues 105–125; it reads GIVLVLVGIIITCCLLSVYMF. Topologically, residues 126 to 142 are cytoplasmic; sequence TRRTKLPIQDMVVLYFL.

It belongs to the orthopoxvirus OPG019 family. Interacts with host EGFR. Post-translationally, cleaved at the cell surface by host ADAM10, thereby releasing the secreted form of VGF.

Its subcellular location is the host membrane. The protein localises to the secreted. In terms of biological role, stimulates cellular proliferation (hyperplasia)and mobility around infected cells to promote rapid and efficient spread of infection. This effect is beneficial for virus replication in vivo, because poxviruses replicate possibly better in proliferating cells than in quiescent cells. Acts by binding host EGFR, inducing its dimerization, autophosphorylation and leading to activation of several cellular pathways regulating cell proliferation or cell survival. The activation by host EGFR of mitogen activated protein kinases (MAPK) and extracellular-signal regulated kinases (ERK) are essential for the positive effect of vaccinia growth factor on poxvirus virulence in vivo. The protein is Pro-Viral epidermal growth factor (OPG019) of Cynomys gunnisoni (Gunnison's prairie dog).